Reading from the N-terminus, the 293-residue chain is Ribosomal RNA small subunit methyltransferase A (293 aa).

Asn-33, Val-35, Gly-60, Glu-81, Asp-111, and Asn-130 together coordinate S-adenosyl-L-methionine.

The protein belongs to the class I-like SAM-binding methyltransferase superfamily. rRNA adenine N(6)-methyltransferase family. RsmA subfamily.

Its subcellular location is the cytoplasm. It catalyses the reaction adenosine(1518)/adenosine(1519) in 16S rRNA + 4 S-adenosyl-L-methionine = N(6)-dimethyladenosine(1518)/N(6)-dimethyladenosine(1519) in 16S rRNA + 4 S-adenosyl-L-homocysteine + 4 H(+). Its function is as follows. Specifically dimethylates two adjacent adenosines (A1518 and A1519) in the loop of a conserved hairpin near the 3'-end of 16S rRNA in the 30S particle. May play a critical role in biogenesis of 30S subunits. In Corynebacterium glutamicum (strain ATCC 13032 / DSM 20300 / JCM 1318 / BCRC 11384 / CCUG 27702 / LMG 3730 / NBRC 12168 / NCIMB 10025 / NRRL B-2784 / 534), this protein is Ribosomal RNA small subunit methyltransferase A.